We begin with the raw amino-acid sequence, 121 residues long: Large ribosomal subunit protein eL31 (121 aa).

The protein belongs to the eukaryotic ribosomal protein eL31 family.

This Panax ginseng (Korean ginseng) protein is Large ribosomal subunit protein eL31 (RPL31).